We begin with the raw amino-acid sequence, 372 residues long: Glutamate 5-kinase (372 aa).

Lysine 6 provides a ligand contact to ATP. Substrate contacts are provided by serine 46, aspartate 133, and asparagine 145. ATP contacts are provided by residues 165-166 and 207-213; these read TD and TGGMYTK. Residues 272-350 form the PUA domain; that stretch reads NGFLFVDEGA…HDIESILGYK (79 aa).

It belongs to the glutamate 5-kinase family.

The protein resides in the cytoplasm. It catalyses the reaction L-glutamate + ATP = L-glutamyl 5-phosphate + ADP. It participates in amino-acid biosynthesis; L-proline biosynthesis; L-glutamate 5-semialdehyde from L-glutamate: step 1/2. In terms of biological role, catalyzes the transfer of a phosphate group to glutamate to form L-glutamate 5-phosphate. This Caldanaerobacter subterraneus subsp. tengcongensis (strain DSM 15242 / JCM 11007 / NBRC 100824 / MB4) (Thermoanaerobacter tengcongensis) protein is Glutamate 5-kinase.